A 401-amino-acid polypeptide reads, in one-letter code: O-methyltransferase mfmE (401 aa).

Residues Gly-243–Gly-244 and Asp-268 each bind S-adenosyl-L-methionine. His-308 acts as the Proton acceptor in catalysis.

It belongs to the class I-like SAM-binding methyltransferase superfamily. Cation-independent O-methyltransferase family. COMT subfamily.

The protein operates within secondary metabolite biosynthesis; terpenoid biosynthesis. Its function is as follows. O-methyltransferase; part of the gene cluster that mediates the biosynthesis of the phthalide-terpenoid hybrid 11'-O-desmethylfendlerol. Within the pathway, mfmE catalyzes the 7-O-methylation of the phthalide 5,7-dihydroxy-4-(hydroxymethyl)-6-methylphthalide to yield 5-hydroxy-4-(hydroxymethyl)-7-methoxy-6-methylphthalide. The biosynthesis of 11'-O-desmethylfendlerol begins with the NR-PKS mfmB that forms 3,5-dimethylorsellinic acid (DMOA), which is then transformed into the phthalide 5,7-dihydroxy-4-(hydroxymethyl)-6-methylphthalide by the cytochrome P450 monooxygenase mfmA and the hydrolase mfmC. Subsequently, the methyltransferase mfmE catalyzes 7-O-methylation to yield 5-hydroxy-4-(hydroxymethyl)-7-methoxy-6-methylphthalide, which undergoes C-3 hydroxylation by the cytochrome P450 monooxygenase mfmF. The resultant cyclopolic acid (2,5-dihydroxy-4-(hydroxymethyl)-7-methoxy-6-methylphthalide) is then farnesylated by the DMATS-type prenyltransferase mfmD to afford 5-O-farnesylcyclopolic acid. Finally, the Pyr4-family terpene cyclase mfmH cyclizes the farnesyl moiety of 5-O-farnesylcyclopolic acid into a drimane-like structure, thus completing the biosynthesis of 11'-O-desmethylfendlerol. The polypeptide is O-methyltransferase mfmE (Annulohypoxylon moriforme (Filamentous fungus)).